The following is a 1568-amino-acid chain: Plexin-C1 (1568 aa).

Residues 1–34 (MEVSRRKAPPRPPRPAAPLPLLAYLLALAAPGRG) form the signal peptide. A Sema domain is found at 35-452 (ADEPVWRSEQ…AGKEVRRIRV (418 aa)). Residues 35 to 944 (ADEPVWRSEQ…YVEQESVPST (910 aa)) lie on the Extracellular side of the membrane. C64 and C87 are joined by a disulfide. Residues N86, N141, and N149 are each glycosylated (N-linked (GlcNAc...) asparagine). 3 disulfides stabilise this stretch: C156/C194, C226/C354, and C283/C329. N-linked (GlcNAc...) asparagine glycosylation is found at N241 and N252. Residues N386 and N407 are each glycosylated (N-linked (GlcNAc...) asparagine). 4 disulfide bridges follow: C455/C472, C461/C506, C464/C481, and C475/C487. N-linked (GlcNAc...) asparagine glycosylation is found at N548, N582, N653, N692, N771, N796, N821, N871, and N890. A helical transmembrane segment spans residues 945–965 (WYFLIVLPVLLVIVIFAAVGV). Residues 966–1568 (TRHKSKELSR…FDEKKKCKWM (603 aa)) lie on the Cytoplasmic side of the membrane. Residue S978 is modified to Phosphoserine.

The protein belongs to the plexin family. In terms of assembly, monomer. Homodimer. Interacts with SEMA7A. N-glycosylated. Detected in heart, brain, lung, spleen and placenta.

It localises to the membrane. Receptor for SEMA7A, for smallpox semaphorin A39R, vaccinia virus semaphorin A39R and for herpesvirus Sema protein. Binding of semaphorins triggers cellular responses leading to the rearrangement of the cytoskeleton and to secretion of IL6 and IL8. The polypeptide is Plexin-C1 (PLXNC1) (Homo sapiens (Human)).